The sequence spans 160 residues: Lymphocyte antigen 96 (160 aa).

The N-terminal stretch at 1–16 (MFPFMLFSTLFSSIFT) is a signal peptide. 3 disulfide bridges follow: cysteine 25–cysteine 51, cysteine 37–cysteine 148, and cysteine 95–cysteine 105. A glycan (N-linked (GlcNAc...) asparagine) is linked at asparagine 26. An N-linked (GlcNAc...) asparagine glycan is attached at asparagine 114. The interaction with lipopolysaccharide stretch occupies residues 119–123 (FSFQG). Asparagine 150 carries an N-linked (GlcNAc...) asparagine glycan.

As to quaternary structure, heterogeneous homomer formed from homodimers; disulfide-linked. Belongs to the lipopolysaccharide (LPS) receptor, a multi-protein complex containing at least CD14, LY96 and TLR4. Binds to the extracellular domains of TLR2 and TLR4. Ligand binding induces interaction with TLR4 and oligomerization of the complex. Post-translationally, N-glycosylated.

It is found in the secreted. It localises to the extracellular space. Binds bacterial lipopolysaccharide (LPS). Cooperates with TLR4 in the innate immune response to bacterial lipopolysaccharide (LPS), and with TLR2 in the response to cell wall components from Gram-positive and Gram-negative bacteria. Enhances TLR4-dependent activation of NF-kappa-B. Cells expressing both LY96 and TLR4, but not TLR4 alone, respond to LPS. The chain is Lymphocyte antigen 96 (LY96) from Bos taurus (Bovine).